The following is an 89-amino-acid chain: MSIKLVNIGFGNIVSANRIVAIVSPESAPIKRIVTEGRDRGMLIDATYGRRTRAVVITDSDHVILSAVQPETVKQRLHTDSSEDDEEIN.

This sequence belongs to the RemA family.

This is Putative regulatory protein Nther_1328 from Natranaerobius thermophilus (strain ATCC BAA-1301 / DSM 18059 / JW/NM-WN-LF).